A 363-amino-acid chain; its full sequence is Histidinol-phosphate aminotransferase (363 aa).

Position 226 is an N6-(pyridoxal phosphate)lysine (K226).

It belongs to the class-II pyridoxal-phosphate-dependent aminotransferase family. Histidinol-phosphate aminotransferase subfamily. In terms of assembly, homodimer. The cofactor is pyridoxal 5'-phosphate.

The enzyme catalyses L-histidinol phosphate + 2-oxoglutarate = 3-(imidazol-4-yl)-2-oxopropyl phosphate + L-glutamate. It functions in the pathway amino-acid biosynthesis; L-histidine biosynthesis; L-histidine from 5-phospho-alpha-D-ribose 1-diphosphate: step 7/9. This is Histidinol-phosphate aminotransferase from Campylobacter lari (strain RM2100 / D67 / ATCC BAA-1060).